Consider the following 459-residue polypeptide: Cysteine--tRNA ligase (459 aa).

C28 is a Zn(2+) binding site. The short motif at 30–40 (VTVYDLCHFGH) is the 'HIGH' region element. Positions 209, 234, and 238 each coordinate Zn(2+). The short motif at 266–270 (KMSKS) is the 'KMSKS' region element. ATP is bound at residue K269.

Belongs to the class-I aminoacyl-tRNA synthetase family. In terms of assembly, monomer. Requires Zn(2+) as cofactor.

It is found in the cytoplasm. The catalysed reaction is tRNA(Cys) + L-cysteine + ATP = L-cysteinyl-tRNA(Cys) + AMP + diphosphate. This is Cysteine--tRNA ligase from Glaesserella parasuis serovar 5 (strain SH0165) (Haemophilus parasuis).